The primary structure comprises 226 residues: Ribonuclease T (226 aa).

The 175-residue stretch at 20-194 folds into the Exonuclease domain; sequence VVIDVETAGF…YDTERTAELF (175 aa). Mg(2+)-binding residues include Asp23, Glu25, His181, and Asp186. The active-site Proton donor/acceptor is His181.

The protein belongs to the RNase T family. Homodimer. The cofactor is Mg(2+).

Its function is as follows. Trims short 3' overhangs of a variety of RNA species, leaving a one or two nucleotide 3' overhang. Responsible for the end-turnover of tRNA: specifically removes the terminal AMP residue from uncharged tRNA (tRNA-C-C-A). Also appears to be involved in tRNA biosynthesis. In Shewanella denitrificans (strain OS217 / ATCC BAA-1090 / DSM 15013), this protein is Ribonuclease T.